The following is a 440-amino-acid chain: L-seryl-tRNA(Sec) selenium transferase (440 aa).

Lys-282 is subject to N6-(pyridoxal phosphate)lysine.

It belongs to the SelA family. Pyridoxal 5'-phosphate is required as a cofactor.

The protein localises to the cytoplasm. It catalyses the reaction L-seryl-tRNA(Sec) + selenophosphate + H(+) = L-selenocysteinyl-tRNA(Sec) + phosphate. It participates in aminoacyl-tRNA biosynthesis; selenocysteinyl-tRNA(Sec) biosynthesis; selenocysteinyl-tRNA(Sec) from L-seryl-tRNA(Sec) (bacterial route): step 1/1. Converts seryl-tRNA(Sec) to selenocysteinyl-tRNA(Sec) required for selenoprotein biosynthesis. The protein is L-seryl-tRNA(Sec) selenium transferase of Campylobacter jejuni subsp. doylei (strain ATCC BAA-1458 / RM4099 / 269.97).